The sequence spans 430 residues: Sorting nexin-4 (430 aa).

Over residues 1–18 the composition is skewed to polar residues; sequence MDSASADASVTGSGNAKG. The tract at residues 1–22 is disordered; that stretch reads MDSASADASVTGSGNAKGSSAE. The region spanning 33-162 is the PX domain; that stretch reads LEILVSDPQK…IFLVGNEWDT (130 aa). A 1,2-diacyl-sn-glycero-3-phospho-(1D-myo-inositol-3-phosphate) is bound by residues Arg83, Lys109, and Arg128. A coiled-coil region spans residues 351-414; it reads ASRRDKINKL…NNLADENIKF (64 aa).

Belongs to the sorting nexin family.

It is found in the cytoplasm. Its subcellular location is the cytosol. The protein localises to the preautophagosomal structure membrane. It localises to the endosome membrane. Functionally, sorting nexin, involved in the separation or division of vacuoles throughout the entire life cycle of the cells. Involved in retrieval of late-Golgi SNAREs from post-Golgi endosomes to the trans-Golgi network, for cytoplasm to vacuole transport (Cvt), and autophagy of large cargos including mitophagy, pexophagy and glycophagy. This chain is Sorting nexin-4 (SNX4), found in Candida glabrata (strain ATCC 2001 / BCRC 20586 / JCM 3761 / NBRC 0622 / NRRL Y-65 / CBS 138) (Yeast).